The primary structure comprises 385 residues: Pre-mRNA-splicing factor slt-11 (385 aa).

The disordered stretch occupies residues 157–233 (RKGREVDEEG…PPGPKDWLPP (77 aa)). Positions 171 to 187 (GSSSGAGRATGGNPAVG) are enriched in low complexity. Positions 239–312 (MSLFVTGIED…CPLRVRWSVP (74 aa)) constitute an RRM domain. Over residues 320-331 (KEQRSEMLRDGR) the composition is skewed to basic and acidic residues. The disordered stretch occupies residues 320–370 (KEQRSEMLRDGRSAFGSGQKTGGQKAIGGQNAQGGASGAQKDDASNLTIAA).

This sequence belongs to the SLT11 family. As to quaternary structure, associated with the spliceosome.

It is found in the nucleus. Involved in pre-mRNA splicing. Facilitates the cooperative formation of U2/U6 helix II in association with stem II in the spliceosome. Binds to RNA. This is Pre-mRNA-splicing factor slt-11 (slt-11) from Neurospora crassa (strain ATCC 24698 / 74-OR23-1A / CBS 708.71 / DSM 1257 / FGSC 987).